The chain runs to 196 residues: Corrinoid adenosyltransferase CobA (196 aa).

36–42 contacts ATP; it reads GNGKGKT.

This sequence belongs to the Cob(I)alamin adenosyltransferase family. As to quaternary structure, homodimer.

It localises to the cytoplasm. It catalyses the reaction 2 cob(II)yrinate a,c diamide + reduced [electron-transfer flavoprotein] + 2 ATP = 2 adenosylcob(III)yrinate a,c-diamide + 2 triphosphate + oxidized [electron-transfer flavoprotein] + 3 H(+). The catalysed reaction is 2 cob(II)alamin + reduced [electron-transfer flavoprotein] + 2 ATP = 2 adenosylcob(III)alamin + 2 triphosphate + oxidized [electron-transfer flavoprotein] + 3 H(+). The protein operates within cofactor biosynthesis; adenosylcobalamin biosynthesis; adenosylcobalamin from cob(II)yrinate a,c-diamide: step 2/7. Its function is as follows. Required for both de novo synthesis of the corrin ring for the assimilation of exogenous corrinoids. Participates in the adenosylation of a variety of incomplete and complete corrinoids. This Salmonella typhimurium (strain LT2 / SGSC1412 / ATCC 700720) protein is Corrinoid adenosyltransferase CobA (btuR).